A 258-amino-acid chain; its full sequence is 5'-nucleotidase SurE (258 aa).

Aspartate 13, aspartate 14, serine 44, and asparagine 92 together coordinate a divalent metal cation. The disordered stretch occupies residues 237–258 (SPLTAPHSTEHHDALDGIATEF).

Belongs to the SurE nucleotidase family. A divalent metal cation serves as cofactor.

Its subcellular location is the cytoplasm. The enzyme catalyses a ribonucleoside 5'-phosphate + H2O = a ribonucleoside + phosphate. In terms of biological role, nucleotidase that shows phosphatase activity on nucleoside 5'-monophosphates. The protein is 5'-nucleotidase SurE of Halobacterium salinarum (strain ATCC 29341 / DSM 671 / R1).